The chain runs to 427 residues: 3-phosphoshikimate 1-carboxyvinyltransferase (427 aa).

The 3-phosphoshikimate site is built by Lys22, Ser23, and Arg27. Lys22 contacts phosphoenolpyruvate. Phosphoenolpyruvate is bound by residues Gly96 and Arg124. Residues Ser169, Ser170, Gln171, Ser197, Asp313, Asn336, and Lys340 each contribute to the 3-phosphoshikimate site. Residue Gln171 participates in phosphoenolpyruvate binding. Asp313 (proton acceptor) is an active-site residue. Phosphoenolpyruvate-binding residues include Arg344, Arg386, and Lys411.

The protein belongs to the EPSP synthase family. Monomer.

The protein localises to the cytoplasm. The enzyme catalyses 3-phosphoshikimate + phosphoenolpyruvate = 5-O-(1-carboxyvinyl)-3-phosphoshikimate + phosphate. It functions in the pathway metabolic intermediate biosynthesis; chorismate biosynthesis; chorismate from D-erythrose 4-phosphate and phosphoenolpyruvate: step 6/7. Functionally, catalyzes the transfer of the enolpyruvyl moiety of phosphoenolpyruvate (PEP) to the 5-hydroxyl of shikimate-3-phosphate (S3P) to produce enolpyruvyl shikimate-3-phosphate and inorganic phosphate. The chain is 3-phosphoshikimate 1-carboxyvinyltransferase from Escherichia coli (strain SMS-3-5 / SECEC).